The sequence spans 453 residues: Bifunctional protein GlmU (453 aa).

Positions 1 to 225 (MHAHVILAAG…AEEALGVNTR (225 aa)) are pyrophosphorylase. Residues 7–10 (LAAG), Lys-21, Gln-72, and 77–78 (GT) contribute to the UDP-N-acetyl-alpha-D-glucosamine site. A Mg(2+)-binding site is contributed by Asp-102. UDP-N-acetyl-alpha-D-glucosamine-binding residues include Gly-138, Glu-152, Asn-167, and Asn-223. Asn-223 lines the Mg(2+) pocket. The interval 226–246 (EELARVEGVLLRRLRAEWMGK) is linker. The N-acetyltransferase stretch occupies residues 247-453 (GVRMILPETI…GYALRKLGEG (207 aa)). Positions 329 and 347 each coordinate UDP-N-acetyl-alpha-D-glucosamine. The active-site Proton acceptor is His-359. 2 residues coordinate UDP-N-acetyl-alpha-D-glucosamine: Tyr-362 and Asn-373. Acetyl-CoA is bound by residues Ala-376, 382-383 (NY), Ser-401, Ala-419, and Arg-436.

In the N-terminal section; belongs to the N-acetylglucosamine-1-phosphate uridyltransferase family. The protein in the C-terminal section; belongs to the transferase hexapeptide repeat family. As to quaternary structure, homotrimer. Mg(2+) serves as cofactor.

It is found in the cytoplasm. It carries out the reaction alpha-D-glucosamine 1-phosphate + acetyl-CoA = N-acetyl-alpha-D-glucosamine 1-phosphate + CoA + H(+). The catalysed reaction is N-acetyl-alpha-D-glucosamine 1-phosphate + UTP + H(+) = UDP-N-acetyl-alpha-D-glucosamine + diphosphate. It functions in the pathway nucleotide-sugar biosynthesis; UDP-N-acetyl-alpha-D-glucosamine biosynthesis; N-acetyl-alpha-D-glucosamine 1-phosphate from alpha-D-glucosamine 6-phosphate (route II): step 2/2. It participates in nucleotide-sugar biosynthesis; UDP-N-acetyl-alpha-D-glucosamine biosynthesis; UDP-N-acetyl-alpha-D-glucosamine from N-acetyl-alpha-D-glucosamine 1-phosphate: step 1/1. Its pathway is bacterial outer membrane biogenesis; LPS lipid A biosynthesis. Catalyzes the last two sequential reactions in the de novo biosynthetic pathway for UDP-N-acetylglucosamine (UDP-GlcNAc). The C-terminal domain catalyzes the transfer of acetyl group from acetyl coenzyme A to glucosamine-1-phosphate (GlcN-1-P) to produce N-acetylglucosamine-1-phosphate (GlcNAc-1-P), which is converted into UDP-GlcNAc by the transfer of uridine 5-monophosphate (from uridine 5-triphosphate), a reaction catalyzed by the N-terminal domain. This Thermus thermophilus (strain ATCC 27634 / DSM 579 / HB8) protein is Bifunctional protein GlmU.